The chain runs to 481 residues: Mediator of RNA polymerase II transcription subunit 3 (481 aa).

The stretch at 79-107 (QEKFQMIRSKVLGLTERLQELSNDFEELQ) forms a coiled coil. Disordered regions lie at residues 140–261 (AGAS…MGTP) and 415–463 (NTKG…KSAY). The span at 148–203 (TPTPAAATPTTAPTPGAGTKKAAKTAPTPTATATIGTPSNNAPTPATTATTPGTQA) shows a compositional bias: low complexity. Basic residues predominate over residues 204-213 (KKPRKPRQTK). Residues 214-248 (KQQQAAAAAAAVAQAQAQAQAQAQNQNQNNMQNKN) are compositionally biased toward low complexity. Over residues 249–259 (ISNPGMNSNMG) the composition is skewed to polar residues. Over residues 428 to 458 (MDQNQNQNQSQNQSQNQNQSMNMNMNNDSNN) the composition is skewed to low complexity.

The protein belongs to the Mediator complex subunit 3 family. As to quaternary structure, component of the Mediator complex.

It localises to the nucleus. Its function is as follows. Component of the Mediator complex, a coactivator involved in regulated gene transcription of nearly all RNA polymerase II-dependent genes. Mediator functions as a bridge to convey information from gene-specific regulatory proteins to the basal RNA polymerase II transcription machinery. Mediator is recruited to promoters by direct interactions with regulatory proteins and serves as a scaffold for the assembly of a functional preinitiation complex with RNA polymerase II and the general transcription factors. The polypeptide is Mediator of RNA polymerase II transcription subunit 3 (PGD1) (Candida glabrata (strain ATCC 2001 / BCRC 20586 / JCM 3761 / NBRC 0622 / NRRL Y-65 / CBS 138) (Yeast)).